Here is a 508-residue protein sequence, read N- to C-terminus: Maturase K (508 aa).

The protein belongs to the intron maturase 2 family. MatK subfamily.

Its subcellular location is the plastid. It localises to the chloroplast. Functionally, usually encoded in the trnK tRNA gene intron. Probably assists in splicing its own and other chloroplast group II introns. The protein is Maturase K of Ranunculus glacialis (Glacier buttercup).